Reading from the N-terminus, the 1149-residue chain is Translocase of chloroplast 126, chloroplastic (1149 aa).

Disordered regions lie at residues 1-206 (MDAL…GKEL), 219-292 (NMPN…RELT), and 315-431 (LELK…VNPS). The span at 131–142 (LYYDDYGDDGEV) shows a compositional bias: acidic residues. Positions 152 to 168 (TSSSSSSSSSECSSSAS) are enriched in low complexity. Composition is skewed to acidic residues over residues 271 to 280 (YDQEGEDADS) and 335 to 357 (GESD…DEHE). The span at 406-429 (TAATDTQSSNAASSTQVAGTTDVN) shows a compositional bias: polar residues. In terms of domain architecture, AIG1-type G spans 514 to 743 (DFACTILVLG…KLQDTAAPGR (230 aa)). Positions 523–530 (GKTGVGKS) are G1. GTP is bound at residue 526 to 531 (GVGKSA). Ser530 serves as a coordination point for Mg(2+). The tract at residues 550–554 (STTNV) is G2. The tract at residues 570 to 573 (DTPG) is G3. Residues 642 to 645 (THAS) are G4. GTP contacts are provided by residues His643 and 691 to 692 (EN). A G5 region spans residues 691–693 (ENH). Disordered stretches follow at residues 769-800 (KLPD…LPPF) and 833-869 (KQHR…DEAG). Over residues 773–796 (EQLDESDESDDDEEDEEEGDEYDD) the composition is skewed to acidic residues. Composition is skewed to basic and acidic residues over residues 833 to 842 (KQHREQLQRR) and 852 to 862 (MRKEGLSHPAD). A helical membrane pass occupies residues 1123-1144 (MVLIGIVPILRSLINCRFGFGG).

This sequence belongs to the TRAFAC class TrmE-Era-EngA-EngB-Septin-like GTPase superfamily. AIG1/Toc34/Toc159-like paraseptin GTPase family. TOC159 subfamily. As to quaternary structure, part of the TOC core complex. Requires Mg(2+) as cofactor.

It is found in the plastid. The protein localises to the chloroplast outer membrane. Functionally, GTPase involved in protein precursor import into chloroplasts. Seems to recognize chloroplast-destined precursor proteins and regulate their presentation to the translocation channel through GTP hydrolysis. Probably specialized in the import of nuclear encoded non-photosynthetic preproteins from the cytoplasm to the chloroplast. This chain is Translocase of chloroplast 126, chloroplastic, found in Physcomitrium patens (Spreading-leaved earth moss).